We begin with the raw amino-acid sequence, 190 residues long: Probable E3 ubiquitin-protein ligase RHB1A (190 aa).

The RING-type; atypical zinc finger occupies 139–180 (CPICFEDYDVENPRLTTKCEHEFHLSCLLEWIERSDRCPICD).

The enzyme catalyses S-ubiquitinyl-[E2 ubiquitin-conjugating enzyme]-L-cysteine + [acceptor protein]-L-lysine = [E2 ubiquitin-conjugating enzyme]-L-cysteine + N(6)-ubiquitinyl-[acceptor protein]-L-lysine.. The protein operates within protein modification; protein ubiquitination. Its function is as follows. Probable E3 ubiquitin-protein ligase that may possess E3 ubiquitin ligase activity in vitro. This Arabidopsis thaliana (Mouse-ear cress) protein is Probable E3 ubiquitin-protein ligase RHB1A.